A 79-amino-acid polypeptide reads, in one-letter code: Sulfur carrier protein TusA (79 aa).

Cys-16 (cysteine persulfide intermediate) is an active-site residue.

This sequence belongs to the sulfur carrier protein TusA family.

It is found in the cytoplasm. Sulfur carrier protein which probably makes part of a sulfur-relay system. In Pseudomonas aeruginosa (strain LESB58), this protein is Sulfur carrier protein TusA.